A 222-amino-acid polypeptide reads, in one-letter code: N-(5'-phosphoribosyl)anthranilate isomerase (222 aa).

This sequence belongs to the TrpF family.

It carries out the reaction N-(5-phospho-beta-D-ribosyl)anthranilate = 1-(2-carboxyphenylamino)-1-deoxy-D-ribulose 5-phosphate. The protein operates within amino-acid biosynthesis; L-tryptophan biosynthesis; L-tryptophan from chorismate: step 3/5. In Xanthomonas oryzae pv. oryzae (strain PXO99A), this protein is N-(5'-phosphoribosyl)anthranilate isomerase.